Here is a 123-residue protein sequence, read N- to C-terminus: Large ribosomal subunit protein uL14 (123 aa).

Belongs to the universal ribosomal protein uL14 family. Part of the 50S ribosomal subunit. Forms a cluster with proteins L3 and L19. In the 70S ribosome, L14 and L19 interact and together make contacts with the 16S rRNA in bridges B5 and B8.

In terms of biological role, binds to 23S rRNA. Forms part of two intersubunit bridges in the 70S ribosome. This is Large ribosomal subunit protein uL14 from Vibrio cholerae serotype O1 (strain ATCC 39541 / Classical Ogawa 395 / O395).